The chain runs to 297 residues: HTH-type transcriptional regulator ArgP (297 aa).

One can recognise an HTH lysR-type domain in the interval 2-58 (FDYKLLSALAAVVEQAGFERAAQVLGLSQSAISQRIKLLEARVGQPVLVRGTPPSPT). The segment at residues 19–38 (FERAAQVLGLSQSAISQRIK) is a DNA-binding region (H-T-H motif).

This sequence belongs to the LysR transcriptional regulatory family. As to quaternary structure, homodimer.

Its function is as follows. Controls the transcription of genes involved in arginine and lysine metabolism. This Pseudomonas fluorescens (strain Pf0-1) protein is HTH-type transcriptional regulator ArgP.